We begin with the raw amino-acid sequence, 112 residues long: MKLITAIVKPFTLDDVKTSLEDAGVLGMTVSEIQGYGRQKGHTEVYRGAEYSVDFVPKVRIEVVVDDSIVDKVVDSIVRAARTGKIGDGKVWVSPVDTIVRVRTGERGHDAL.

Tyrosine 51 bears the O-UMP-tyrosine mark.

This sequence belongs to the P(II) protein family. As to quaternary structure, homotrimer.

In terms of biological role, in nitrogen-limiting conditions, when the ratio of Gln to 2-ketoglutarate decreases, P-II is uridylylated to P-II-UMP. P-II-UMP allows the deadenylation of glutamine synthetase (GS), thus activating the enzyme. Conversely, in nitrogen excess P-II is deuridylated and promotes the adenylation of GS. P-II indirectly controls the transcription of the GS gene (glnA). P-II prevents NR-II-catalyzed conversion of NR-I to NR-I-phosphate, the transcriptional activator of glnA. When P-II is uridylylated to P-II-UMP, these events are reversed. In Mycobacterium bovis (strain ATCC BAA-935 / AF2122/97), this protein is Nitrogen regulatory protein P-II (glnB).